The chain runs to 631 residues: 1-deoxy-D-xylulose-5-phosphate synthase (631 aa).

Residues H72 and 113 to 115 (GHA) contribute to the thiamine diphosphate site. D144 is a Mg(2+) binding site. Residues 145–146 (GA), N174, Y287, and E370 each bind thiamine diphosphate. N174 provides a ligand contact to Mg(2+).

It belongs to the transketolase family. DXPS subfamily. As to quaternary structure, homodimer. Requires Mg(2+) as cofactor. Thiamine diphosphate is required as a cofactor.

The enzyme catalyses D-glyceraldehyde 3-phosphate + pyruvate + H(+) = 1-deoxy-D-xylulose 5-phosphate + CO2. Its pathway is metabolic intermediate biosynthesis; 1-deoxy-D-xylulose 5-phosphate biosynthesis; 1-deoxy-D-xylulose 5-phosphate from D-glyceraldehyde 3-phosphate and pyruvate: step 1/1. In terms of biological role, catalyzes the acyloin condensation reaction between C atoms 2 and 3 of pyruvate and glyceraldehyde 3-phosphate to yield 1-deoxy-D-xylulose-5-phosphate (DXP). The chain is 1-deoxy-D-xylulose-5-phosphate synthase from Prochlorococcus marinus (strain MIT 9515).